Here is a 194-residue protein sequence, read N- to C-terminus: Leucyl/phenylalanyl-tRNA--protein transferase (194 aa).

It belongs to the L/F-transferase family.

It is found in the cytoplasm. The enzyme catalyses N-terminal L-lysyl-[protein] + L-leucyl-tRNA(Leu) = N-terminal L-leucyl-L-lysyl-[protein] + tRNA(Leu) + H(+). The catalysed reaction is N-terminal L-arginyl-[protein] + L-leucyl-tRNA(Leu) = N-terminal L-leucyl-L-arginyl-[protein] + tRNA(Leu) + H(+). It catalyses the reaction L-phenylalanyl-tRNA(Phe) + an N-terminal L-alpha-aminoacyl-[protein] = an N-terminal L-phenylalanyl-L-alpha-aminoacyl-[protein] + tRNA(Phe). Its function is as follows. Functions in the N-end rule pathway of protein degradation where it conjugates Leu, Phe and, less efficiently, Met from aminoacyl-tRNAs to the N-termini of proteins containing an N-terminal arginine or lysine. In Chlorobaculum tepidum (strain ATCC 49652 / DSM 12025 / NBRC 103806 / TLS) (Chlorobium tepidum), this protein is Leucyl/phenylalanyl-tRNA--protein transferase.